Consider the following 500-residue polypeptide: MPFVMAIDQGTTSSRAILFRSDISIAASAQQEFPQHFPASGWVEHEPEDIWATTIATCRAAMDKAGATAADIAAIGITNQRETVVVWDAVSGQAIHRAIVWQDRRTAEFCTRLKADGLEPMVTAKTGLIIDPYFSGTKVAWLLDNVPGARARAERGELKFGTVDCYLLWRLTGGKVHATDATNASRTLLFNIHDGAWDDELLKLLGVPRSMLPEVKDSSAHFGDSVPELFGGSITIRGIAGDQQAATIGQACFTPGMIKSTYGTGCFALLNTGATPVKSNNKLLTTVAYQLDGKRTYALEGSIFVAGSAVQWLRDGLGVIKHASETGPLADKSDSAQSVYLVPAFVGMGAPYWNPRVRGALFGLTRNTGPAELAHAALESVCYQTFDLWAAMRADWPDADAATTVLRVDGGMTASDWTMQRLADLLDAPVDRPVIQETTALGAAYLAGLSAGVFPEPQKFADNWRLDHRFRPAMSAATRERKLAGWGRAVKGLLATDEGE.

Residue threonine 11 coordinates ADP. ATP-binding residues include threonine 11, threonine 12, and serine 13. Threonine 11 contacts sn-glycerol 3-phosphate. Arginine 15 contacts ADP. Arginine 81, glutamate 82, tyrosine 133, and aspartate 242 together coordinate sn-glycerol 3-phosphate. 5 residues coordinate glycerol: arginine 81, glutamate 82, tyrosine 133, aspartate 242, and glutamine 243. ADP-binding residues include threonine 264 and glycine 307. ATP contacts are provided by threonine 264, glycine 307, glutamine 311, and glycine 411. An ADP-binding site is contributed by glycine 411.

Belongs to the FGGY kinase family.

The catalysed reaction is glycerol + ATP = sn-glycerol 3-phosphate + ADP + H(+). It functions in the pathway polyol metabolism; glycerol degradation via glycerol kinase pathway; sn-glycerol 3-phosphate from glycerol: step 1/1. With respect to regulation, inhibited by fructose 1,6-bisphosphate (FBP). Its function is as follows. Key enzyme in the regulation of glycerol uptake and metabolism. Catalyzes the phosphorylation of glycerol to yield sn-glycerol 3-phosphate. In Rhodopseudomonas palustris (strain ATCC BAA-98 / CGA009), this protein is Glycerol kinase.